Reading from the N-terminus, the 185-residue chain is ATP-dependent protease subunit HslV (185 aa).

Residue Thr-12 is part of the active site. Na(+) contacts are provided by Ala-168, Cys-171, and Thr-174.

It belongs to the peptidase T1B family. HslV subfamily. As to quaternary structure, a double ring-shaped homohexamer of HslV is capped on each side by a ring-shaped HslU homohexamer. The assembly of the HslU/HslV complex is dependent on binding of ATP.

It is found in the cytoplasm. The enzyme catalyses ATP-dependent cleavage of peptide bonds with broad specificity.. Allosterically activated by HslU binding. Functionally, protease subunit of a proteasome-like degradation complex believed to be a general protein degrading machinery. In Roseobacter denitrificans (strain ATCC 33942 / OCh 114) (Erythrobacter sp. (strain OCh 114)), this protein is ATP-dependent protease subunit HslV.